Reading from the N-terminus, the 199-residue chain is Peroxynitrite isomerase (199 aa).

A GXWXGXG motif is present at residues 20 to 26; the sequence is GVWEGSG. The heme b site is built by Lys-158 and His-190.

The protein belongs to the nitrobindin family. In terms of assembly, homodimer. Heme b is required as a cofactor.

The enzyme catalyses peroxynitrite = nitrate. It functions in the pathway nitrogen metabolism. Heme-binding protein able to scavenge peroxynitrite and to protect free L-tyrosine against peroxynitrite-mediated nitration, by acting as a peroxynitrite isomerase that converts peroxynitrite to nitrate. Therefore, this protein likely plays a role in peroxynitrite sensing and in the detoxification of reactive nitrogen and oxygen species (RNS and ROS, respectively). Is able to bind nitric oxide (NO) in vitro, but may act as a sensor of peroxynitrite levels in vivo. This Clavibacter sepedonicus (Clavibacter michiganensis subsp. sepedonicus) protein is Peroxynitrite isomerase.